The primary structure comprises 112 residues: Small ribosomal subunit protein bS6 (112 aa).

This sequence belongs to the bacterial ribosomal protein bS6 family.

Functionally, binds together with bS18 to 16S ribosomal RNA. The polypeptide is Small ribosomal subunit protein bS6 (Azobacteroides pseudotrichonymphae genomovar. CFP2).